We begin with the raw amino-acid sequence, 447 residues long: NAC domain containing protein 50 (447 aa).

The segment at 1–21 (MGRESLAVVSSPPSATAPSTA) is disordered. Positions 27 to 178 (LAPGFRFHPT…AYVLCRVFHK (152 aa)) constitute an NAC domain. The DNA-binding element occupies 126-184 (LGMKKTLVFHSGRAPDGLRTNWVMHEYRLVEYETETNGSLLQDAYVLCRVFHKNNIGPP). 2 disordered regions span residues 246–303 (DATP…NKEA) and 371–392 (KENQ…EEKV). Basic and acidic residues predominate over residues 281 to 293 (TLKREHAEEDERP). Residues 392 to 447 (VNDLQKEVHQMSVERETFKLEMMSAEAMISILQSRIDALRQENEELKKKNASGQAS) are a coiled coil.

Interacts with JMJ14 and NAC052. As to expression, mostly expressed in floral organs, and, at low levels, in other organs.

Its subcellular location is the nucleus. Transcriptional repressor that binds to the motif 5'-(C/T)A(C/A)G-3' in the promoter of target genes. Also binds to the 5'-CTTGNNNNNCAAG-3' consensus sequence in chromatin. Can bind to the mitochondrial dysfunction motif (MDM) present in the upstream regions of mitochondrial dysfunction stimulon (MDS) genes involved in mitochondrial retrograde regulation (MRR). Together with NAC051/NAC052 and JMJ14, regulates gene expression and flowering time by associating with the histone demethylase JMJ14, probably by the promotion of RNA-mediated gene silencing. This is NAC domain containing protein 50 from Arabidopsis thaliana (Mouse-ear cress).